Here is an 88-residue protein sequence, read N- to C-terminus: uncharacterized protein (88 aa).

This is an uncharacterized protein from Treponema pallidum (strain Nichols).